A 258-amino-acid chain; its full sequence is Pyridoxine 5'-phosphate synthase (258 aa).

Asparagine 6 provides a ligand contact to 3-amino-2-oxopropyl phosphate. 8–9 is a binding site for 1-deoxy-D-xylulose 5-phosphate; the sequence is DH. 3-amino-2-oxopropyl phosphate is bound at residue arginine 17. The active-site Proton acceptor is the histidine 42. Residues arginine 44 and histidine 49 each coordinate 1-deoxy-D-xylulose 5-phosphate. Glutamate 69 (proton acceptor) is an active-site residue. Threonine 99 is a binding site for 1-deoxy-D-xylulose 5-phosphate. The Proton donor role is filled by histidine 213. 3-amino-2-oxopropyl phosphate is bound by residues glycine 214 and 235–236; that span reads GQ.

This sequence belongs to the PNP synthase family. In terms of assembly, homooctamer; tetramer of dimers.

Its subcellular location is the cytoplasm. The catalysed reaction is 3-amino-2-oxopropyl phosphate + 1-deoxy-D-xylulose 5-phosphate = pyridoxine 5'-phosphate + phosphate + 2 H2O + H(+). It functions in the pathway cofactor biosynthesis; pyridoxine 5'-phosphate biosynthesis; pyridoxine 5'-phosphate from D-erythrose 4-phosphate: step 5/5. Functionally, catalyzes the complicated ring closure reaction between the two acyclic compounds 1-deoxy-D-xylulose-5-phosphate (DXP) and 3-amino-2-oxopropyl phosphate (1-amino-acetone-3-phosphate or AAP) to form pyridoxine 5'-phosphate (PNP) and inorganic phosphate. This is Pyridoxine 5'-phosphate synthase from Sulfurovum sp. (strain NBC37-1).